Reading from the N-terminus, the 442-residue chain is tRNA-2-methylthio-N(6)-dimethylallyladenosine synthase (442 aa).

The MTTase N-terminal domain occupies 3-120 (KKLYIETHGC…LPEMIDAARI (118 aa)). Positions 12, 49, 83, 157, 161, and 164 each coordinate [4Fe-4S] cluster. The 233-residue stretch at 143–375 (RVDGPSAYVS…QHRLNQQGFE (233 aa)) folds into the Radical SAM core domain. Residues 378–442 (RQMVGSIQRI…PHSLRGSLLQ (65 aa)) form the TRAM domain.

Belongs to the methylthiotransferase family. MiaB subfamily. As to quaternary structure, monomer. [4Fe-4S] cluster serves as cofactor.

The protein localises to the cytoplasm. It carries out the reaction N(6)-dimethylallyladenosine(37) in tRNA + (sulfur carrier)-SH + AH2 + 2 S-adenosyl-L-methionine = 2-methylsulfanyl-N(6)-dimethylallyladenosine(37) in tRNA + (sulfur carrier)-H + 5'-deoxyadenosine + L-methionine + A + S-adenosyl-L-homocysteine + 2 H(+). Functionally, catalyzes the methylthiolation of N6-(dimethylallyl)adenosine (i(6)A), leading to the formation of 2-methylthio-N6-(dimethylallyl)adenosine (ms(2)i(6)A) at position 37 in tRNAs that read codons beginning with uridine. This is tRNA-2-methylthio-N(6)-dimethylallyladenosine synthase from Pseudomonas savastanoi pv. phaseolicola (strain 1448A / Race 6) (Pseudomonas syringae pv. phaseolicola (strain 1448A / Race 6)).